We begin with the raw amino-acid sequence, 97 residues long: YcgL domain-containing protein CPS_3517 (97 aa).

The 85-residue stretch at Met-1–Lys-85 folds into the YcgL domain.

In Colwellia psychrerythraea (strain 34H / ATCC BAA-681) (Vibrio psychroerythus), this protein is YcgL domain-containing protein CPS_3517.